The sequence spans 214 residues: Calcineurin B-like protein 8 (214 aa).

EF-hand domains lie at 35–70 (EIEALHDLFKKLSTSIINDGLIHKEEFLLALFRNGS), 71–106 (MQNLFADRVFYMFDRKRNGVIEFGEFVRSLSIFHPY), 108–143 (PEHEKSAFMFKLFDLHGTGFIEPHELKKMVGALLGE), and 152–187 (SIEAIVEQTMLEVDTNKDGKIDEEEWKELVAKNPSI). Asp-165, Asn-167, Asp-169, Lys-171, and Glu-176 together coordinate Ca(2+). Ser-205 is subject to Phosphoserine.

It belongs to the calcineurin regulatory subunit family. As to quaternary structure, interacts with CIPK23. Interacts with CIPK14 at the cell membrane exclusively.

It localises to the cytoplasm. The protein localises to the nucleus. The protein resides in the cell membrane. In terms of biological role, acts as a calcium sensor. CBL proteins interact with CIPK serine-threonine protein kinases. Binding of a CBL protein to the regulatory NAF domain of a CIPK protein lead to the activation of the kinase in a calcium-dependent manner. The protein is Calcineurin B-like protein 8 (CBL8) of Arabidopsis thaliana (Mouse-ear cress).